The chain runs to 124 residues: Large ribosomal subunit protein bL12 (124 aa).

Belongs to the bacterial ribosomal protein bL12 family. As to quaternary structure, homodimer. Part of the ribosomal stalk of the 50S ribosomal subunit. Forms a multimeric L10(L12)X complex, where L10 forms an elongated spine to which 2 to 4 L12 dimers bind in a sequential fashion. Binds GTP-bound translation factors.

In terms of biological role, forms part of the ribosomal stalk which helps the ribosome interact with GTP-bound translation factors. Is thus essential for accurate translation. The polypeptide is Large ribosomal subunit protein bL12 (Sulfurovum sp. (strain NBC37-1)).